Here is a 710-residue protein sequence, read N- to C-terminus: Polyribonucleotide nucleotidyltransferase (710 aa).

Residues aspartate 487 and aspartate 493 each contribute to the Mg(2+) site. In terms of domain architecture, KH spans 554 to 613 (PKIITMTINPDKIRDVIGPSGKQINKIIEETGVKIDIEQDGTVFISSIDQQMNEKAKKII). Residues 623-691 (GEIYLGKVKR…KQGRVNLSRK (69 aa)) form the S1 motif domain.

Belongs to the polyribonucleotide nucleotidyltransferase family. The cofactor is Mg(2+).

It is found in the cytoplasm. The catalysed reaction is RNA(n+1) + phosphate = RNA(n) + a ribonucleoside 5'-diphosphate. Functionally, involved in mRNA degradation. Catalyzes the phosphorolysis of single-stranded polyribonucleotides processively in the 3'- to 5'-direction. In Bacillus cytotoxicus (strain DSM 22905 / CIP 110041 / 391-98 / NVH 391-98), this protein is Polyribonucleotide nucleotidyltransferase.